Reading from the N-terminus, the 304-residue chain is 33 kDa chaperonin (304 aa).

Disulfide bonds link C245-C247 and C278-C281.

The protein belongs to the HSP33 family. Under oxidizing conditions two disulfide bonds are formed involving the reactive cysteines. Under reducing conditions zinc is bound to the reactive cysteines and the protein is inactive.

It is found in the cytoplasm. Redox regulated molecular chaperone. Protects both thermally unfolding and oxidatively damaged proteins from irreversible aggregation. Plays an important role in the bacterial defense system toward oxidative stress. The sequence is that of 33 kDa chaperonin from Microcystis aeruginosa (strain NIES-843 / IAM M-2473).